The primary structure comprises 627 residues: (-)-alpha-terpineol synthase, chloroplastic (627 aa).

The transit peptide at 1 to 52 directs the protein to the chloroplast; the sequence is MDLISVLPSASKSCVCLHKPLSSSTHKLKPFCKTIRILVMPRRWEFARPSMS. 3 residues coordinate Mg(2+): Asp-378, Asp-382, and Asp-530. A DDXXD motif motif is present at residues 378 to 382; sequence DDMYD.

The protein belongs to the terpene synthase family. Tpsd subfamily. Mg(2+) serves as cofactor. The cofactor is Mn(2+).

It is found in the plastid. The protein resides in the chloroplast. The catalysed reaction is (2E)-geranyl diphosphate + H2O = (S)-alpha-terpineol + diphosphate. It functions in the pathway terpene metabolism; oleoresin biosynthesis. Involved in defensive oleoresin formation in conifers in response to insect attack or other injury. Involved in monoterpene (C10) olefins biosynthesis. Produces 57.3% alpha-terpineol (15.1% (+)/84.9% (-)), 27.6% limonene (25.2% (+)/74.8% (-)), 8% terpinolene, 4.7% beta-pinene (14.8% (+)/85.2% (-)), 1.3% alpha-pinene (100% (+)) and 1.1% myrcene. This is (-)-alpha-terpineol synthase, chloroplastic (PT10) from Pinus taeda (Loblolly pine).